The chain runs to 488 residues: Glutamyl-tRNA(Gln) amidotransferase subunit A (488 aa).

Catalysis depends on charge relay system residues lysine 76 and serine 151. The Acyl-ester intermediate role is filled by serine 175.

The protein belongs to the amidase family. GatA subfamily. In terms of assembly, heterotrimer of A, B and C subunits.

It carries out the reaction L-glutamyl-tRNA(Gln) + L-glutamine + ATP + H2O = L-glutaminyl-tRNA(Gln) + L-glutamate + ADP + phosphate + H(+). In terms of biological role, allows the formation of correctly charged Gln-tRNA(Gln) through the transamidation of misacylated Glu-tRNA(Gln) in organisms which lack glutaminyl-tRNA synthetase. The reaction takes place in the presence of glutamine and ATP through an activated gamma-phospho-Glu-tRNA(Gln). This is Glutamyl-tRNA(Gln) amidotransferase subunit A from Symbiobacterium thermophilum (strain DSM 24528 / JCM 14929 / IAM 14863 / T).